A 245-amino-acid chain; its full sequence is Heat shock transcription factor (245 aa).

The DNA-binding element occupies 17-115 (KSGFVNRLYR…LISLITRDKS (99 aa)). Residues 130–169 (SLQYLASCNYKQQKEINDLKDRIKTLETKYATLYEIISNA) are involved in trimerization.

It belongs to the HSF family. In terms of assembly, homotrimer. Homotrimerization increases the affinity of HSF1 to DNA.

Its subcellular location is the nucleus. Functionally, DNA-binding transcription factor that specifically binds heat shock promoter elements (HSE) and activates transcription. This chain is Heat shock transcription factor, found in Enterocytozoon bieneusi (strain H348) (Microsporidian parasite).